The following is a 411-amino-acid chain: Arginine deiminase (411 aa).

Cys-401 (amidino-cysteine intermediate) is an active-site residue.

This sequence belongs to the arginine deiminase family.

The protein resides in the cytoplasm. The enzyme catalyses L-arginine + H2O = L-citrulline + NH4(+). Its pathway is amino-acid degradation; L-arginine degradation via ADI pathway; carbamoyl phosphate from L-arginine: step 1/2. The polypeptide is Arginine deiminase (Streptococcus equi subsp. zooepidemicus (strain MGCS10565)).